A 391-amino-acid chain; its full sequence is Putative alpha-ketoglutarate-dependent sulfonate dioxygenase (391 aa).

Residues His204 and Asp206 each contribute to the Fe cation site. 2 residues coordinate 2-oxoglutarate: Thr231 and Trp338. His353 provides a ligand contact to Fe cation. The 2-oxoglutarate site is built by Arg364 and Arg368.

Belongs to the TfdA dioxygenase family. Fe(2+) serves as cofactor.

It participates in organosulfur degradation; alkanesulfonate degradation. Acts as an alpha-ketoglutarate-dependent dioxygenase active on sulfonates. The chain is Putative alpha-ketoglutarate-dependent sulfonate dioxygenase from Schizosaccharomyces pombe (strain 972 / ATCC 24843) (Fission yeast).